The sequence spans 332 residues: MTISLKTAPLLEVSNLSVDFRTDGGWINAVDDVNFTLAPRETLGLVGESGSGKSVTALSLLRLHDQRNSRLGGSVRYKGEDLFTLATSRLRQIRGHEIAMVFQDPIHTLNPVLTIGRQIEEGLRLHHGLQGREARKRAIELLDRVRIPDAARRIDEYPHRMSGGQRQRVMIAIAIAGDPKILIADEPTTALDVTVQAQIMELLRNLRDELSMSVILISHDLGLVSEFADRAMVMYAGQPVETGPIDKIFDEPLHPYTEGLLSAIPDLDDDLDRLPTIPGSIPEPSRRPPGCRFAPRCTFAQASCVKPQPIMSLTGGRASRCPPRLPTEECVL.

In terms of domain architecture, ABC transporter spans 11–261 (LEVSNLSVDF…PLHPYTEGLL (251 aa)). 47-54 (GESGSGKS) is a binding site for ATP.

The protein belongs to the ABC transporter superfamily. The complex is composed of two ATP-binding proteins (BruAb2_1033 and BruAb2_1034), two transmembrane proteins (BruAb2_1031 and BruAb2_1032) and a solute-binding protein (BruAb2_1030).

Its subcellular location is the cell inner membrane. Probably part of an ABC transporter complex that could be involved in peptide import. Probably responsible for energy coupling to the transport system. The polypeptide is Putative peptide import ATP-binding protein BruAb2_1033 (Brucella abortus biovar 1 (strain 9-941)).